The following is a 1436-amino-acid chain: DNA-directed RNA polymerase subunit beta' (1436 aa).

Cys-70, Cys-72, Cys-85, and Cys-88 together coordinate Zn(2+). Mg(2+) is bound by residues Asp-481, Asp-483, and Asp-485. 4 residues coordinate Zn(2+): Cys-829, Cys-903, Cys-910, and Cys-913.

This sequence belongs to the RNA polymerase beta' chain family. The RNAP catalytic core consists of 2 alpha, 1 beta, 1 beta' and 1 omega subunit. When a sigma factor is associated with the core the holoenzyme is formed, which can initiate transcription. Mg(2+) serves as cofactor. The cofactor is Zn(2+).

The catalysed reaction is RNA(n) + a ribonucleoside 5'-triphosphate = RNA(n+1) + diphosphate. Functionally, DNA-dependent RNA polymerase catalyzes the transcription of DNA into RNA using the four ribonucleoside triphosphates as substrates. This is DNA-directed RNA polymerase subunit beta' from Flavobacterium johnsoniae (strain ATCC 17061 / DSM 2064 / JCM 8514 / BCRC 14874 / CCUG 350202 / NBRC 14942 / NCIMB 11054 / UW101) (Cytophaga johnsonae).